Here is a 119-residue protein sequence, read N- to C-terminus: MVKLAFPRELRLLTPKHFTYVFQQPQRASSPEITILGRPNELGHPRIGLTIAKKNVKRAHERNRIKRLARESFRLNQHELPPMDFVVLVRKGVAELDNRALTEALGKLWRRHCRLARAS.

This sequence belongs to the RnpA family. As to quaternary structure, consists of a catalytic RNA component (M1 or rnpB) and a protein subunit.

The catalysed reaction is Endonucleolytic cleavage of RNA, removing 5'-extranucleotides from tRNA precursor.. In terms of biological role, RNaseP catalyzes the removal of the 5'-leader sequence from pre-tRNA to produce the mature 5'-terminus. It can also cleave other RNA substrates such as 4.5S RNA. The protein component plays an auxiliary but essential role in vivo by binding to the 5'-leader sequence and broadening the substrate specificity of the ribozyme. This chain is Ribonuclease P protein component, found in Photorhabdus laumondii subsp. laumondii (strain DSM 15139 / CIP 105565 / TT01) (Photorhabdus luminescens subsp. laumondii).